The following is a 715-amino-acid chain: Fatty acid oxidation complex subunit alpha (715 aa).

The interval 1–189 is enoyl-CoA hydratase/isomerase; sequence MIYQGETLSV…KVGAIDAVVA (189 aa). D296 provides a ligand contact to substrate. The segment at 311–715 is 3-hydroxyacyl-CoA dehydrogenase; it reads AKATRHAAVL…EMAAQGKTFY (405 aa). NAD(+) contacts are provided by residues M325, D344, 401–403, K408, and S430; that span reads VVE. Catalysis depends on H451, which acts as the For 3-hydroxyacyl-CoA dehydrogenase activity. Residue N454 participates in NAD(+) binding. Substrate-binding residues include N501 and Y661.

In the N-terminal section; belongs to the enoyl-CoA hydratase/isomerase family. The protein in the C-terminal section; belongs to the 3-hydroxyacyl-CoA dehydrogenase family. Heterotetramer of two alpha chains (FadB) and two beta chains (FadA).

It catalyses the reaction a (3S)-3-hydroxyacyl-CoA + NAD(+) = a 3-oxoacyl-CoA + NADH + H(+). It carries out the reaction a (3S)-3-hydroxyacyl-CoA = a (2E)-enoyl-CoA + H2O. The enzyme catalyses a 4-saturated-(3S)-3-hydroxyacyl-CoA = a (3E)-enoyl-CoA + H2O. The catalysed reaction is (3S)-3-hydroxybutanoyl-CoA = (3R)-3-hydroxybutanoyl-CoA. It catalyses the reaction a (3Z)-enoyl-CoA = a 4-saturated (2E)-enoyl-CoA. It carries out the reaction a (3E)-enoyl-CoA = a 4-saturated (2E)-enoyl-CoA. It functions in the pathway lipid metabolism; fatty acid beta-oxidation. Functionally, involved in the aerobic and anaerobic degradation of long-chain fatty acids via beta-oxidation cycle. Catalyzes the formation of 3-oxoacyl-CoA from enoyl-CoA via L-3-hydroxyacyl-CoA. It can also use D-3-hydroxyacyl-CoA and cis-3-enoyl-CoA as substrate. The chain is Fatty acid oxidation complex subunit alpha from Aeromonas salmonicida (strain A449).